A 150-amino-acid chain; its full sequence is MAYLDPTLLILLVLAGLGIISHNMTVTLAILVLLAIRITPLNSYFPWVEKYGLSIGIVILTIGVMAPIASGKITASEVMHSFLHWKSLLAILIGVAVSWLGGRGVSLMSNQPSVVAGLLVGTVMGVALFRGVPVGPLIAAGLLSLLIGKT.

A run of 4 helical transmembrane segments spans residues 1–21, 51–71, 82–102, and 127–147; these read MAYLDPTLLILLVLAGLGIIS, YGLSIGIVILTIGVMAPIASG, FLHWKSLLAILIGVAVSWLGG, and ALFRGVPVGPLIAAGLLSLLI.

It belongs to the UPF0756 family.

It is found in the cell membrane. This chain is UPF0756 membrane protein PC1_1142, found in Pectobacterium carotovorum subsp. carotovorum (strain PC1).